Consider the following 968-residue polypeptide: MPFTLGQRWISDTESELGLGTVVALDARMVTLLFPAIGENRLYSRNDSPITRVMFNPGDTITSHEGWQLHVDKVNEENGLLSYTGTRLDTQEANVTLREVLLDSKLVFSKPQDRLFAGQIDRMDRFALRYRARKFQSEQYRMPWSGLRGQRTSLIPHQLNIAHDVGRRHAPRVLLADEVGLGKTIEAGMILHQQLLSGAAERVLIVVPETLQHQWLVEMLRRFNLRFSLFDDERYAEAQHDAYNPFETEQLVICSLDFVRRSKQRLEHLCDAEWDLMVVDEAHHLVWSEEAPSREYQAIEQLAERVPGILLLTATPEQLGMESHFARLRLLDPNRFHDFAQFVEEQQNYRPVADAVALLLAGNTLSDSELNTLGDLIGEQDIEPLLQAANSDREDAQAARQELVSMLMDRHGTSRVLFRNTRNGVKGFPKRELHTIRLPLPTQYQTAIKVSGIMGARKTAEERARDMLYPEQIYQEFEGDTGTWWNFDPRVEWLMGYLTSHRSQKVLVICAKAATALQLEQVLREREGIRAAVFHEGMSIIERDRAAAWFAEEDTGAQVLLCSEIGSEGRNFQFASNLVMFDLPFNPDLLEQRIGRLDRIGQAHDIQIHVPYLEKTAQSVLVRWYHEGLDAFEHTCPTGRTVYDSVHDELINYLAAPESTDGFDDLIKSCRQQHDALKAQLEQGRDRLLEIHSNGGEKAQALAESIEEQDDDTSLIAFSMNLFDIVGINQDDRGENLIVLTPSDHMLVPDFPGLPEDGCTITFERDVALSREDAQFITWEHPLIRNGLDLILSGDTGSSTISLLKNKALPVGTLLLELIYVVEAQAPKQLQLNRFLPATPVRLLLDKNGNNLAGQVEFESFNRQLSAVNRHTGSKLVNAVQQDVHAILQQGEAQIAKAALGLIDAARNEADEKLTAELSRLEALKAVNPNIRDDELAAIESNRQQVMDALAQAGWRLDALRLIVVTHQ.

A Helicase ATP-binding domain is found at 164–334; it reads DVGRRHAPRV…FARLRLLDPN (171 aa). 177–184 is a binding site for ATP; that stretch reads DEVGLGKT. The DEAH box signature appears at 280–283; the sequence is DEAH. The 155-residue stretch at 490 to 644 folds into the Helicase C-terminal domain; that stretch reads RVEWLMGYLT…TCPTGRTVYD (155 aa).

This sequence belongs to the SNF2/RAD54 helicase family. RapA subfamily. In terms of assembly, interacts with the RNAP. Has a higher affinity for the core RNAP than for the holoenzyme. Its ATPase activity is stimulated by binding to RNAP.

Its function is as follows. Transcription regulator that activates transcription by stimulating RNA polymerase (RNAP) recycling in case of stress conditions such as supercoiled DNA or high salt concentrations. Probably acts by releasing the RNAP, when it is trapped or immobilized on tightly supercoiled DNA. Does not activate transcription on linear DNA. Probably not involved in DNA repair. This chain is RNA polymerase-associated protein RapA, found in Klebsiella pneumoniae (strain 342).